We begin with the raw amino-acid sequence, 129 residues long: Small ribosomal subunit protein uS11 (129 aa).

It belongs to the universal ribosomal protein uS11 family. As to quaternary structure, part of the 30S ribosomal subunit. Interacts with proteins S7 and S18. Binds to IF-3.

Located on the platform of the 30S subunit, it bridges several disparate RNA helices of the 16S rRNA. Forms part of the Shine-Dalgarno cleft in the 70S ribosome. This is Small ribosomal subunit protein uS11 from Brucella abortus (strain S19).